The primary structure comprises 529 residues: MTAMKGDSEDSIESMRPSNLQVFANNSTLHGMSHIFAYGHMTFRRFLWTLSFMGSLGLLMYVCMDRVYYYFEFPHVTKLDEVAAPNLTFPAVTFCNLNEFRFSKITKNDLYHVGELLALLNENYQIANPHLADPEVLTLLKEKASFNGFKPKQFNMTDFYNRTGHDINEMLLQCSFRGEECFPLNFTTIYTRYGKCYTFNSGLDGNPLLTTLKGGTGNGLEIMLDIQQDEYLPVWGDTDETSYEAGIKVQIHSQDEPPFIDQLGFGVAPGFQTFVSCQQQLLLYLPPPWGDCRSAPMDSEYFSTYSITACRIDCETRYLLENCNCRMVHMPGTSTVCTPEQYKDCADPALDFLVEKDNDYCVCDTPCNMTRYGKELSMVKIPSKASAKYLAKKFNKTEQYITDNILVLDIFFEALNYEKIEQKKAYEVAGLLGDIGGQMGLFIGASVLTILEIFDYLYEVLKDKILGSVLRKRRPHRSASDNLVIVSLHDFKISSVFLLASYMCFVCYIVLLNAACVYLPFVVGSNSGK.

At 1–51 (MTAMKGDSEDSIESMRPSNLQVFANNSTLHGMSHIFAYGHMTFRRFLWTLS) the chain is on the cytoplasmic side. The helical transmembrane segment at 52–68 (FMGSLGLLMYVCMDRVY) threads the bilayer. The Extracellular portion of the chain corresponds to 69 to 427 (YYFEFPHVTK…EKIEQKKAYE (359 aa)). N-linked (GlcNAc...) asparagine glycans are attached at residues asparagine 86, asparagine 155, and asparagine 161. 7 disulfides stabilise this stretch: cysteine 95/cysteine 196, cysteine 174/cysteine 181, cysteine 292/cysteine 367, cysteine 310/cysteine 363, cysteine 314/cysteine 361, cysteine 323/cysteine 345, and cysteine 325/cysteine 337. Asparagine 185 is a glycosylation site (N-linked (GlcNAc...) asparagine). 2 N-linked (GlcNAc...) asparagine glycosylation sites follow: asparagine 368 and asparagine 395. Residues 428–458 (VAGLLGDIGGQMGLFIGASVLTILEIFDYLY) form a discontinuously helical membrane-spanning segment. A GAS motif; ion selectivity filter motif is present at residues 444-446 (GAS). The Cytoplasmic segment spans residues 459–529 (EVLKDKILGS…PFVVGSNSGK (71 aa)).

The protein belongs to the amiloride-sensitive sodium channel (TC 1.A.6) family. ASIC1 subfamily. As to quaternary structure, homotrimer. Heterotrimer; with other ASIC proteins producing channel with different properties. Interacts with asic1a. As to expression, expressed in central nervous system.

It is found in the cell membrane. The protein localises to the postsynaptic cell membrane. Its subcellular location is the cell projection. The protein resides in the dendrite. The enzyme catalyses Na(+)(in) = Na(+)(out). The catalysed reaction is K(+)(in) = K(+)(out). It catalyses the reaction Li(+)(in) = Li(+)(out). It carries out the reaction Ca(2+)(in) = Ca(2+)(out). Inhibited by the diuretic drug amiloride. Functionally, forms voltage-independent, pH-gated trimeric sodium channels that act as postsynaptic excitatory receptors in the nervous system, playing a crucial role in regulating synaptic plasticity, learning, and memory. Upon extracellular pH drop this channel elicits transient, fast activating, and completely desensitizing inward currents. Displays high selectivity for sodium ions but can also permit the permeation of other cations. The protein is Acid-sensing ion channel 1C of Danio rerio (Zebrafish).